Here is a 341-residue protein sequence, read N- to C-terminus: Keratin-associated protein 29-1 (341 aa).

Tandem repeats lie at residues 5-9 (CCPGN), 115-119 (CCQEK), 120-124 (CCDAS), 150-154 (CCDAG), 240-244 (CCVPS), 276-280 (CCKPA), and 307-311 (CCVTG). The 7 X 5 AA repeats of C-C-X(3) stretch occupies residues 5–311 (CCPGNTTAIP…GCKSACCVTG (307 aa)).

Belongs to the KRTAP type 10 family.

The polypeptide is Keratin-associated protein 29-1 (KRTAP29-1) (Homo sapiens (Human)).